The following is a 616-amino-acid chain: Dihydroxy-acid dehydratase (616 aa).

Asp81 is a Mg(2+) binding site. Cys122 serves as a coordination point for [2Fe-2S] cluster. Mg(2+)-binding residues include Asp123 and Lys124. Lys124 bears the N6-carboxylysine mark. Cys195 contacts [2Fe-2S] cluster. Mg(2+) is bound at residue Glu491. Ser517 serves as the catalytic Proton acceptor.

The protein belongs to the IlvD/Edd family. As to quaternary structure, homodimer. [2Fe-2S] cluster is required as a cofactor. It depends on Mg(2+) as a cofactor.

The catalysed reaction is (2R)-2,3-dihydroxy-3-methylbutanoate = 3-methyl-2-oxobutanoate + H2O. It carries out the reaction (2R,3R)-2,3-dihydroxy-3-methylpentanoate = (S)-3-methyl-2-oxopentanoate + H2O. The protein operates within amino-acid biosynthesis; L-isoleucine biosynthesis; L-isoleucine from 2-oxobutanoate: step 3/4. It participates in amino-acid biosynthesis; L-valine biosynthesis; L-valine from pyruvate: step 3/4. Its function is as follows. Functions in the biosynthesis of branched-chain amino acids. Catalyzes the dehydration of (2R,3R)-2,3-dihydroxy-3-methylpentanoate (2,3-dihydroxy-3-methylvalerate) into 2-oxo-3-methylpentanoate (2-oxo-3-methylvalerate) and of (2R)-2,3-dihydroxy-3-methylbutanoate (2,3-dihydroxyisovalerate) into 2-oxo-3-methylbutanoate (2-oxoisovalerate), the penultimate precursor to L-isoleucine and L-valine, respectively. The polypeptide is Dihydroxy-acid dehydratase (Salmonella schwarzengrund (strain CVM19633)).